Here is a 119-residue protein sequence, read N- to C-terminus: MAKLTYRGSEYTKFKKFRIKKNDEVICITGKHKGKRGKVLSIDKKRDRVIVEGLNKRKRFMRPTQENPQGGVIEVEAPIHISNVMFYDPKKKKKAGVRVGFETVKGKKVRVSRPDKKEL.

Belongs to the universal ribosomal protein uL24 family. In terms of assembly, part of the 50S ribosomal subunit.

Its function is as follows. One of two assembly initiator proteins, it binds directly to the 5'-end of the 23S rRNA, where it nucleates assembly of the 50S subunit. One of the proteins that surrounds the polypeptide exit tunnel on the outside of the subunit. In Leptospira interrogans serogroup Icterohaemorrhagiae serovar copenhageni (strain Fiocruz L1-130), this protein is Large ribosomal subunit protein uL24.